A 467-amino-acid polypeptide reads, in one-letter code: UDP-N-acetylmuramate--L-alanine ligase (467 aa).

Residue 114-120 (GTHGKTT) coordinates ATP.

It belongs to the MurCDEF family.

The protein resides in the cytoplasm. The catalysed reaction is UDP-N-acetyl-alpha-D-muramate + L-alanine + ATP = UDP-N-acetyl-alpha-D-muramoyl-L-alanine + ADP + phosphate + H(+). It functions in the pathway cell wall biogenesis; peptidoglycan biosynthesis. Its function is as follows. Cell wall formation. This Rhodopseudomonas palustris (strain ATCC BAA-98 / CGA009) protein is UDP-N-acetylmuramate--L-alanine ligase.